A 312-amino-acid chain; its full sequence is Gamma-soluble NSF attachment protein (312 aa).

Positions lysine 281–cysteine 312 are disordered. Residues alanine 285 to alanine 299 are compositionally biased toward low complexity. Residues alanine 300 to cysteine 312 show a composition bias toward acidic residues.

It belongs to the SNAP family. As to quaternary structure, interacts with RAB11FIP5. Interacts with VTI1A.

Its subcellular location is the membrane. The protein localises to the golgi apparatus. Required for vesicular transport between the endoplasmic reticulum and the Golgi apparatus. The protein is Gamma-soluble NSF attachment protein of Bos taurus (Bovine).